A 314-amino-acid chain; its full sequence is Malate dehydrogenase (314 aa).

NAD(+) contacts are provided by residues 11 to 16 (GSGNIG) and Asp-35. Residues Arg-84 and Arg-90 each contribute to the substrate site. Residues Asn-97 and 120-122 (ITN) contribute to the NAD(+) site. Residues Asn-122 and Arg-153 each coordinate substrate. His-177 (proton acceptor) is an active-site residue.

The protein belongs to the LDH/MDH superfamily. MDH type 3 family.

The enzyme catalyses (S)-malate + NAD(+) = oxaloacetate + NADH + H(+). Its function is as follows. Catalyzes the reversible oxidation of malate to oxaloacetate. This is Malate dehydrogenase from Rickettsia canadensis (strain McKiel).